A 239-amino-acid chain; its full sequence is Ribosomal RNA small subunit methyltransferase G (239 aa).

S-adenosyl-L-methionine contacts are provided by residues Gly75, Leu80, 126–127 (AE), and Arg142.

This sequence belongs to the methyltransferase superfamily. RNA methyltransferase RsmG family.

Its subcellular location is the cytoplasm. Its function is as follows. Specifically methylates the N7 position of guanine in position 518 of 16S rRNA. In Streptomyces coelicolor (strain ATCC BAA-471 / A3(2) / M145), this protein is Ribosomal RNA small subunit methyltransferase G.